We begin with the raw amino-acid sequence, 754 residues long: Polycomb protein mes-3 (754 aa).

Residues 1–83 are disordered; sequence MTPATAEVKV…PTKLENIQKT (83 aa). The segment covering 31–40 has biased composition (basic and acidic residues); that stretch reads ARREEEKENL. Low complexity predominate over residues 51–61; that stretch reads SSEAGSSRESS.

In terms of assembly, forms a heterotrimeric complex with the Polycomb proteins mes-2 and mes-3. Does not interact with mes-4. Interacts with nyfa-1. In adults, it is predominantly expressed in the germline, and weakly expressed in intestinal cells.

The protein resides in the nucleus. Its function is as follows. Component of a Polycomb group (PcG) complex. PcG proteins act by forming multiprotein complexes, which are required to maintain the transcriptionally repressive state of homeotic genes throughout development. In association with the nfya-1-NF-Y complex, may play a role in repressing the expression of the homeobox protein egl-5 in tissues such as the head. PcG proteins are not required to initiate repression, but to maintain it during later stages of development. The mes-2/mes-3/mes-6 complex may participate in the global inactivation of the X chromosomes in germline cells. The complex may act via methylation of histone H3 'Lys-27', rendering chromatin heritably changed in its expressibility. This complex is required to exclude mes-4 from the inactivated X-chromosomes in germline cells. In Caenorhabditis elegans, this protein is Polycomb protein mes-3.